A 397-amino-acid chain; its full sequence is Lipid-A-disaccharide synthase (397 aa).

Belongs to the LpxB family.

The enzyme catalyses a lipid X + a UDP-2-N,3-O-bis[(3R)-3-hydroxyacyl]-alpha-D-glucosamine = a lipid A disaccharide + UDP + H(+). It participates in bacterial outer membrane biogenesis; LPS lipid A biosynthesis. Its function is as follows. Condensation of UDP-2,3-diacylglucosamine and 2,3-diacylglucosamine-1-phosphate to form lipid A disaccharide, a precursor of lipid A, a phosphorylated glycolipid that anchors the lipopolysaccharide to the outer membrane of the cell. The protein is Lipid-A-disaccharide synthase of Mannheimia succiniciproducens (strain KCTC 0769BP / MBEL55E).